The chain runs to 311 residues: uncharacterized protein (311 aa).

Transmembrane regions (helical) follow at residues 13–33, 41–61, 76–96, 103–123, 128–148, 157–177, 192–212, 218–238, 248–268, and 272–292; these read STAV…GFFS, FELV…CWLA, LQTL…FKSF, IAIS…SFFY, NVIS…ISGI, LMGS…FTTL, FLQT…GAFA, NWIM…LLFF, FISI…TVFT, and PDLY…LTLV. 2 consecutive EamA domains span residues 24–147 and 166–292; these read VIFG…LISG and VLAA…LTLV.

It belongs to the EamA transporter family.

The protein localises to the cell membrane. This is an uncharacterized protein from Bacillus subtilis (strain 168).